A 732-amino-acid chain; its full sequence is MAPKSKKQAATQSKSKKSKDLVDERFQAIVLTDSFETRFMPLTAVHPRCLLPLANVPLIEYTLEFLANAGVNEVYLMCSAHADQIQEYIENSKWMGDNSPFSVTTIMSIESRSVGDTMRDLDNRGLIAGDFLLVSGDVVTNMDFSKALQFHKQKKAQDKDHIATMVLNQASPLHRTRSQIDPAAFVLDKETNRCIFYQSIPPVSGKKTCISIDPELLEDFQGELQVRNDLIDCHVDICSPHVPQIFQENFDYQYLRSDFLKGVLTSDLLKKTIYAYISKDSSEYAARVESWSTYDAISQDILARWCYPLVPDSNLVEGNSYSYELNNIYKEDKIILAQSCKIGTSTSIGRNSSVGEGTQIKNSVIGRNCTIGKNVVIENSYIWDNAVIKDNSVLNRSIVAADAQIGNNVTLSPGSVIGFNVIIGDDKVIPHNVKIVETPIVTENEFGDFDDESNSEDENEYEDGNAVPVLAVKDVELVGETGKGFAYESEIESGDEDDEEFVGNGTYSGIIYQMKSLNVSDDSIASVSNKKVKKHSHRRRLSMNSMISDNGGAFESDEGEEEEDFGVEGLATVTRAIENNHDIDTALLELNTLRMSMNVTYHDVRSVTTQALVNKIVDFITTGTLTPQEAATKIFTKWGIMFKRQVFSPEEEVDLLNIVEEKSSVLDKAYNQIVLFLGVKSFYDMEVVEEENILKWWNDGENDEVRTLAAKFITWLQEADEEDSDEDDEDSE.

Residues 559–726 (GEEEEDFGVE…QEADEEDSDE (168 aa)) enclose the W2 domain.

Belongs to the eIF-2B gamma/epsilon subunits family. In terms of assembly, component of the translation initiation factor 2B (eIF2B) complex which is a heterodecamer of two sets of five different subunits: alpha, beta, gamma, delta and epsilon. Subunits alpha, beta and delta comprise a regulatory subcomplex and subunits epsilon and gamma comprise a catalytic subcomplex. Within the complex, the hexameric regulatory complex resides at the center, with the two heterodimeric catalytic subcomplexes bound on opposite sides.

It is found in the cytoplasm. It localises to the cytosol. Acts as a component of the translation initiation factor 2B (eIF2B) complex, which catalyzes the exchange of GDP for GTP on the eukaryotic initiation factor 2 (eIF2) complex gamma subunit. Its guanine nucleotide exchange factor activity is repressed when bound to eIF2 complex phosphorylated on the alpha subunit, thereby limiting the amount of methionyl-initiator methionine tRNA available to the ribosome and consequently global translation is repressed. This is Translation initiation factor eIF2B subunit epsilon (GCD6) from Candida albicans (strain SC5314 / ATCC MYA-2876) (Yeast).